We begin with the raw amino-acid sequence, 249 residues long: Large ribosomal subunit protein uL4 (249 aa).

This sequence belongs to the universal ribosomal protein uL4 family. As to quaternary structure, part of the 50S ribosomal subunit.

In terms of biological role, one of the primary rRNA binding proteins, this protein initially binds near the 5'-end of the 23S rRNA. It is important during the early stages of 50S assembly. It makes multiple contacts with different domains of the 23S rRNA in the assembled 50S subunit and ribosome. Functionally, forms part of the polypeptide exit tunnel. The chain is Large ribosomal subunit protein uL4 from Methanoculleus marisnigri (strain ATCC 35101 / DSM 1498 / JR1).